Consider the following 163-residue polypeptide: Nucleotide-binding protein LBJ_2391 (163 aa).

It belongs to the YajQ family.

Functionally, nucleotide-binding protein. The chain is Nucleotide-binding protein LBJ_2391 from Leptospira borgpetersenii serovar Hardjo-bovis (strain JB197).